Here is a 342-residue protein sequence, read N- to C-terminus: Pre-mRNA-splicing factor 18 (342 aa).

N-acetylmethionine is present on Met-1.

Belongs to the PRP18 family. As to quaternary structure, heterodimer with PPIH. Interacts with PRPF4 and with the spliceosome. Part of a complex containing U4/U6 snRNPs.

Its subcellular location is the nucleus speckle. Functionally, participates in the second step of pre-mRNA splicing. The polypeptide is Pre-mRNA-splicing factor 18 (Prpf18) (Mus musculus (Mouse)).